A 261-amino-acid polypeptide reads, in one-letter code: Hydroxyethylthiazole kinase (261 aa).

Substrate is bound at residue Met45. ATP is bound by residues Arg121 and Ser167. Position 194 (Gly194) interacts with substrate.

This sequence belongs to the Thz kinase family. Requires Mg(2+) as cofactor.

The catalysed reaction is 5-(2-hydroxyethyl)-4-methylthiazole + ATP = 4-methyl-5-(2-phosphooxyethyl)-thiazole + ADP + H(+). It participates in cofactor biosynthesis; thiamine diphosphate biosynthesis; 4-methyl-5-(2-phosphoethyl)-thiazole from 5-(2-hydroxyethyl)-4-methylthiazole: step 1/1. Functionally, catalyzes the phosphorylation of the hydroxyl group of 4-methyl-5-beta-hydroxyethylthiazole (THZ). This chain is Hydroxyethylthiazole kinase, found in Vibrio atlanticus (strain LGP32) (Vibrio splendidus (strain Mel32)).